Consider the following 254-residue polypeptide: Pyruvate aldolase (254 aa).

His48 acts as the Proton acceptor in catalysis. A divalent metal cation contacts are provided by Glu151 and Asp177.

The protein belongs to the HpcH/HpaI aldolase family. A divalent metal cation serves as cofactor.

It carries out the reaction D-glyceraldehyde + pyruvate = 2-dehydro-3-deoxy-L-galactonate. Its function is as follows. Aldolase which can catalyze in vitro the aldolisation reaction between pyruvate (PA) and D-glyceraldehyde (D-GA) to form 2-dehydro-3-deoxy-L-galactonate. This Rhizobium etli (strain ATCC 51251 / DSM 11541 / JCM 21823 / NBRC 15573 / CFN 42) protein is Pyruvate aldolase.